The chain runs to 487 residues: Sensor protein CseC (487 aa).

The span at 1 to 11 (MRGNLRRPGPA) shows a compositional bias: low complexity. The interval 1–41 (MRGNLRRPGPAGTAGPGRTGIRTSADGGRARPRTGAGTGVR) is disordered. A run of 2 helical transmembrane segments spans residues 63–83 (ISAA…LVVH) and 185–205 (ALII…VLIG). Positions 206–262 (GQLSRRLRKAAAAANQVAQGERDVRVRDAIGGVVRDETDDLARAVDAMADALQQRIE) constitute an HAMP domain. The Histidine kinase domain maps to 270-472 (DIAHELRTPV…VAVLWLPEHA (203 aa)). The residue at position 273 (His273) is a Phosphohistidine; by autocatalysis.

It is found in the cell membrane. It catalyses the reaction ATP + protein L-histidine = ADP + protein N-phospho-L-histidine.. The chain is Sensor protein CseC (cseC) from Streptomyces avermitilis (strain ATCC 31267 / DSM 46492 / JCM 5070 / NBRC 14893 / NCIMB 12804 / NRRL 8165 / MA-4680).